The sequence spans 250 residues: UDP-2,3-diacylglucosamine hydrolase (250 aa).

Aspartate 8, histidine 10, aspartate 41, asparagine 79, and histidine 115 together coordinate Mn(2+). 79-80 provides a ligand contact to substrate; sequence NH. Substrate-binding residues include aspartate 123, threonine 165, lysine 168, and histidine 196. Mn(2+)-binding residues include histidine 196 and histidine 198.

The protein belongs to the LpxH family. The cofactor is Mn(2+).

The protein resides in the cell inner membrane. It carries out the reaction UDP-2-N,3-O-bis[(3R)-3-hydroxytetradecanoyl]-alpha-D-glucosamine + H2O = 2-N,3-O-bis[(3R)-3-hydroxytetradecanoyl]-alpha-D-glucosaminyl 1-phosphate + UMP + 2 H(+). It participates in glycolipid biosynthesis; lipid IV(A) biosynthesis; lipid IV(A) from (3R)-3-hydroxytetradecanoyl-[acyl-carrier-protein] and UDP-N-acetyl-alpha-D-glucosamine: step 4/6. In terms of biological role, hydrolyzes the pyrophosphate bond of UDP-2,3-diacylglucosamine to yield 2,3-diacylglucosamine 1-phosphate (lipid X) and UMP by catalyzing the attack of water at the alpha-P atom. Involved in the biosynthesis of lipid A, a phosphorylated glycolipid that anchors the lipopolysaccharide to the outer membrane of the cell. The polypeptide is UDP-2,3-diacylglucosamine hydrolase (Blochmanniella pennsylvanica (strain BPEN)).